The chain runs to 103 residues: FRNVESKSCCPNTTGRNIYNTCRLGGGSRERCASLSGCKIISASTCPSDYPKFYCTLGCQSSKCASITTPPNSEVDAEAVRCKAACSNLCDFGVTTNQEIQDD.

The N-terminal stretch at 1–6 (FRNVES) is a signal peptide. Disulfide bonds link C9–C46, C10–C38, and C22–C32. The propeptide at 53–103 (FYCTLGCQSSKCASITTPPNSEVDAEAVRCKAACSNLCDFGVTTNQEIQDD) is acidic domain.

The protein belongs to the plant thionin (TC 1.C.44) family.

The protein localises to the secreted. Thionins are small plant proteins which are toxic to animal cells. They seem to exert their toxic effect at the level of the cell membrane. Their precise function is not known. In Viscum album (European mistletoe), this protein is Viscotoxin-B (THI2.2).